Reading from the N-terminus, the 122-residue chain is Large ribosomal subunit protein uL14 (122 aa).

The protein belongs to the universal ribosomal protein uL14 family. As to quaternary structure, part of the 50S ribosomal subunit. Forms a cluster with proteins L3 and L19. In the 70S ribosome, L14 and L19 interact and together make contacts with the 16S rRNA in bridges B5 and B8.

In terms of biological role, binds to 23S rRNA. Forms part of two intersubunit bridges in the 70S ribosome. The protein is Large ribosomal subunit protein uL14 of Trichodesmium erythraeum (strain IMS101).